The primary structure comprises 267 residues: Sepiapterin reductase (267 aa).

Met1 is subject to N-acetylmethionine. 20–26 lines the NADP(+) pocket; the sequence is GASRGFG. Ser38 is modified (phosphoserine). NADP(+) contacts are provided by residues 48 to 49 and 75 to 76; these read RN and DL. Residues 163–164 and Tyr176 each bind substrate; that span reads SI. Lys180 is a binding site for NADP(+). Ser201 is modified (phosphoserine). Gly205 is a binding site for substrate. 207-212 provides a ligand contact to NADP(+); the sequence is LDTDMQ. Ser219 is subject to Phosphoserine. Asp263 lines the substrate pocket.

This sequence belongs to the sepiapterin reductase family. In terms of assembly, homodimer.

It localises to the cytoplasm. It catalyses the reaction L-erythro-7,8-dihydrobiopterin + NADP(+) = L-sepiapterin + NADPH + H(+). The enzyme catalyses (6R)-L-erythro-5,6,7,8-tetrahydrobiopterin + 2 NADP(+) = 6-pyruvoyl-5,6,7,8-tetrahydropterin + 2 NADPH + 2 H(+). In terms of biological role, catalyzes the final one or two reductions in tetra-hydrobiopterin biosynthesis to form 5,6,7,8-tetrahydrobiopterin. The protein is Sepiapterin reductase (SPR) of Bos taurus (Bovine).